The chain runs to 86 residues: YcgL domain-containing protein IL1825 (86 aa).

Residues 1-85 (MLCDVYRSSK…KREELQVNVN (85 aa)) enclose the YcgL domain.

In Idiomarina loihiensis (strain ATCC BAA-735 / DSM 15497 / L2-TR), this protein is YcgL domain-containing protein IL1825.